The chain runs to 436 residues: tRNA-2-methylthio-N(6)-dimethylallyladenosine synthase (436 aa).

Residues 5–120 (KKLFIQTLGC…IKDVVDVKGA (116 aa)) form the MTTase N-terminal domain. Residues C14, C51, C83, C152, C156, and C159 each contribute to the [4Fe-4S] cluster site. The Radical SAM core domain occupies 138–372 (KTNKYRASVN…IELHKRYLEE (235 aa)). Residues 375–436 (PKLIGETLNI…RTSLKGEVVN (62 aa)) form the TRAM domain.

Belongs to the methylthiotransferase family. MiaB subfamily. As to quaternary structure, monomer. Requires [4Fe-4S] cluster as cofactor.

Its subcellular location is the cytoplasm. The enzyme catalyses N(6)-dimethylallyladenosine(37) in tRNA + (sulfur carrier)-SH + AH2 + 2 S-adenosyl-L-methionine = 2-methylsulfanyl-N(6)-dimethylallyladenosine(37) in tRNA + (sulfur carrier)-H + 5'-deoxyadenosine + L-methionine + A + S-adenosyl-L-homocysteine + 2 H(+). Its function is as follows. Catalyzes the methylthiolation of N6-(dimethylallyl)adenosine (i(6)A), leading to the formation of 2-methylthio-N6-(dimethylallyl)adenosine (ms(2)i(6)A) at position 37 in tRNAs that read codons beginning with uridine. This is tRNA-2-methylthio-N(6)-dimethylallyladenosine synthase from Aliarcobacter butzleri (strain RM4018) (Arcobacter butzleri).